Reading from the N-terminus, the 234-residue chain is RNA chaperone ProQ (234 aa).

Basic and acidic residues predominate over residues 104–130 (LEEAKARVQAQRDARKREAAENGEKRE). Residues 104-186 (LEEAKARVQA…QRSTPVTSLE (83 aa)) form a disordered region. Basic residues predominate over residues 131–142 (PRRPRPAGKKPT). Basic and acidic residues-rich tracts occupy residues 143 to 156 (ARRDGEQGSKEVRK) and 163 to 176 (TSERKPRAKSETTE). A compositionally biased stretch (polar residues) spans 177–186 (QRSTPVTSLE).

It belongs to the ProQ family.

The protein resides in the cytoplasm. Functionally, RNA chaperone with significant RNA binding, RNA strand exchange and RNA duplexing activities. May regulate ProP activity through an RNA-based, post-transcriptional mechanism. The chain is RNA chaperone ProQ from Edwardsiella ictaluri (strain 93-146).